The primary structure comprises 551 residues: Protein PLASTID TRANSCRIPTIONALLY ACTIVE 12, chloroplastic (551 aa).

Residues 1 to 47 constitute a chloroplast transit peptide; the sequence is MASCSRTWLLPGMAPQATAQTVPRPLQSLKVFAGLPHRRRVLFSGVS. 2 disordered regions span residues 76–161 and 463–529; these read SSYF…EGES and HSYN…DQLS. The span at 109–119 shows a compositional bias: low complexity; that stretch reads RVRAARAPAPV. Acidic residues-rich tracts occupy residues 467–476 and 485–498; these read EDSDDDEEDA and SLED…DAED. Polar residues predominate over residues 505-516; the sequence is RNWSVLKTTGQA. A compositionally biased stretch (basic and acidic residues) spans 518 to 529; that stretch reads NPKEKSKKDQLS.

In terms of assembly, component of the plastid-encoded plastid RNA polymerase (PEP) complex.

The protein resides in the plastid. It is found in the chloroplast. Required for the activity of the plastid-encoded RNA polymerase (PEP) and full expression of genes transcribed by PEP. Required for the proper build-up and formation of the PEP-complex. Binds single-stranded (ss) DNA and RNA, but not double-stranded (ds) DNA. This is Protein PLASTID TRANSCRIPTIONALLY ACTIVE 12, chloroplastic from Oryza sativa subsp. japonica (Rice).